Here is a 187-residue protein sequence, read N- to C-terminus: Probable chemoreceptor glutamine deamidase CheD 1 (187 aa).

It belongs to the CheD family.

The catalysed reaction is L-glutaminyl-[protein] + H2O = L-glutamyl-[protein] + NH4(+). Its function is as follows. Probably deamidates glutamine residues to glutamate on methyl-accepting chemotaxis receptors (MCPs), playing an important role in chemotaxis. In Ruegeria sp. (strain TM1040) (Silicibacter sp.), this protein is Probable chemoreceptor glutamine deamidase CheD 1.